The sequence spans 791 residues: IQ motif and ubiquitin-like domain-containing protein (791 aa).

Residues 1–73 (MSNQQEKYEA…SDQSFSSLEP (73 aa)) form a disordered region. Positions 131-207 (ATVKVVLIPV…VQVEIFSTNP (77 aa)) constitute a Ubiquitin-like domain. The IQ domain occupies 338–367 (RLKAVIVIQTYYRQWHAKIFVENLRRQKSL).

Component of the axonemal radial spoke 1 (RS1) complex, at least composed of spoke head proteins RSPH1, RSPH3, RSPH9 and the cilia-specific component RSPH4A or sperm-specific component RSPH6A, spoke stalk proteins RSPH14, DNAJB13, DYDC1, ROPN1L and NME5, and the anchor protein IQUB. Does not appear to be part of radial spoke complexes 2 or 3 (RS2 or RS3). Interacts with CALM1. Interacts with DNAJB13. Interacts with DYNLL2. Interacts with NME5. Interacts with RSPH3. Interacts with RSPH9. Interacts with ZMYND10. Interacts with calmodulin; the interaction occurs in conditions of low but not high calcium.

The protein localises to the cytoplasm. Its subcellular location is the cytoskeleton. The protein resides in the flagellum axoneme. It localises to the cell projection. It is found in the cilium. Functionally, adapter protein that anchors the radial spoke 1 (RS1) complex to the A microtubule of outer doublet microtubules in axonemes. The triple radial spokes (RS1, RS2 and RS3) are required to modulate beating of the sperm flagellum. May play a role in inhibiting signaling via MAPK1/ERK2 and MAPK3/ERK1. Additionally, may play a role in the functioning of cilia. Not required for the functioning of tracheal or ependymal cilia. This Homo sapiens (Human) protein is IQ motif and ubiquitin-like domain-containing protein (IQUB).